The following is a 454-amino-acid chain: Ribosomal protein uS12 methylthiotransferase RimO (454 aa).

The MTTase N-terminal domain occupies 9–124 (PKIGFVSLGC…VMDAVHLHMP (116 aa)). [4Fe-4S] cluster contacts are provided by C18, C54, C83, C155, C159, and C162. Positions 141 to 382 (LTPKHFAYLK…MLLQEEISKK (242 aa)) constitute a Radical SAM core domain. In terms of domain architecture, TRAM spans 385-454 (QAKVGKTMRV…ADAHDLWAEA (70 aa)).

This sequence belongs to the methylthiotransferase family. RimO subfamily. [4Fe-4S] cluster is required as a cofactor.

Its subcellular location is the cytoplasm. It carries out the reaction L-aspartate(89)-[ribosomal protein uS12]-hydrogen + (sulfur carrier)-SH + AH2 + 2 S-adenosyl-L-methionine = 3-methylsulfanyl-L-aspartate(89)-[ribosomal protein uS12]-hydrogen + (sulfur carrier)-H + 5'-deoxyadenosine + L-methionine + A + S-adenosyl-L-homocysteine + 2 H(+). Its function is as follows. Catalyzes the methylthiolation of an aspartic acid residue of ribosomal protein uS12. The chain is Ribosomal protein uS12 methylthiotransferase RimO from Herminiimonas arsenicoxydans.